Consider the following 671-residue polypeptide: Chitin biosynthesis protein CHS5 (671 aa).

The region spanning 78–168 (KPESPVLKIV…EKVILRTHKM (91 aa)) is the Fibronectin type-III domain. The 97-residue stretch at 166-262 (HKMTDMSGIT…RIVGVRGFYL (97 aa)) folds into the BRCT domain. Residues 280-671 (EELSYSKENE…KKNKKKGKKK (392 aa)) form a disordered region. Position 305 is a phosphothreonine (Thr-305). Residues 311–321 (ASPNDNESNPS) show a composition bias toward polar residues. Over residues 322 to 332 (EAKEQGEKSGH) the composition is skewed to basic and acidic residues. A phosphoserine mark is found at Ser-338, Ser-362, Ser-365, Ser-383, and Ser-384. Polar residues predominate over residues 349–365 (ALENETTIETVNPSVRS). Residues 409-419 (KSEDTDTHSNE) are compositionally biased toward basic and acidic residues. The segment covering 434 to 443 (NNITTESAGE) has biased composition (polar residues). Residues 461 to 486 (EIETPEVNESIEDANEPAEDSNEPVE) are compositionally biased toward acidic residues. The segment covering 487-521 (DSNKPVKDSNKPVEDSNKPVEDSNKPVEDSNKPVE) has biased composition (basic and acidic residues). The span at 522–538 (DANEPVEDTSEPVEDAG) shows a compositional bias: acidic residues. Polar residues predominate over residues 542–551 (QETNEFTTDI). Residues Ser-573 and Ser-579 each carry the phosphoserine modification. The segment covering 581–591 (EDVKPEEKGSE) has biased composition (basic and acidic residues). Lys-584 participates in a covalent cross-link: Glycyl lysine isopeptide (Lys-Gly) (interchain with G-Cter in ubiquitin). Position 590 is a phosphoserine (Ser-590). Over residues 606–620 (GESTTHQKTEASASL) the composition is skewed to polar residues. Residues 627 to 638 (EEQETTEAEVNT) show a composition bias toward acidic residues. Over residues 657-671 (NKKKNKKNKKKGKKK) the composition is skewed to basic residues.

This sequence belongs to the CHS5 family. Component of the CHS5/6 complex composed of the 4 CHAPS proteins BCH1, BCH2, BUD7, and CHS6 as well as at least CHS5 and GTP-bound ARF1. The complex interacts with the cargo protein CHS3.

The protein resides in the golgi apparatus. The protein localises to the trans-Golgi network membrane. Its function is as follows. Component of the CHS5/6 complex which mediates export of specific cargo proteins, including chitin synthase CHS3. Also involved in targeting FUS1 to sites of polarized growth. In Saccharomyces cerevisiae (strain ATCC 204508 / S288c) (Baker's yeast), this protein is Chitin biosynthesis protein CHS5 (CHS5).